The primary structure comprises 578 residues: L-2,3-diaminopropanoate--citrate ligase (578 aa).

The protein belongs to the IucA/IucC family. In terms of assembly, forms a mixture of monomer and dimer in solution.

It carries out the reaction (S)-2,3-diaminopropanoate + citrate + ATP = 2-[(L-alanin-3-ylcarbamoyl)methyl]-2-hydroxybutanedioate + AMP + diphosphate. It functions in the pathway siderophore biosynthesis. In terms of biological role, catalyzes the synthesis of citryl-L-2,3-diaminopropionic acid from L-2,3-diaminopropionic acid (L-Dap) and citrate, the first step in staphyloferrin B biosynthesis. The chain is L-2,3-diaminopropanoate--citrate ligase from Staphylococcus aureus (strain NCTC 8325 / PS 47).